The sequence spans 151 residues: Ribonuclease H (151 aa).

Positions Ser-2–Asp-143 constitute an RNase H type-1 domain. Asp-11, Glu-49, Asp-71, and Asp-135 together coordinate Mg(2+).

The protein belongs to the RNase H family. In terms of assembly, monomer. Mg(2+) serves as cofactor.

Its subcellular location is the cytoplasm. The catalysed reaction is Endonucleolytic cleavage to 5'-phosphomonoester.. Endonuclease that specifically degrades the RNA of RNA-DNA hybrids. This Methylobacillus flagellatus (strain ATCC 51484 / DSM 6875 / VKM B-1610 / KT) protein is Ribonuclease H.